The primary structure comprises 304 residues: Oxygen-dependent coproporphyrinogen-III oxidase (304 aa).

Residue Ser-94 coordinates substrate. Positions 98 and 108 each coordinate a divalent metal cation. His-108 serves as the catalytic Proton donor. Position 110-112 (110-112) interacts with substrate; that stretch reads NVR. Residues His-147 and His-177 each coordinate a divalent metal cation. Positions 242–277 are important for dimerization; the sequence is YVEFNLVYDRGTLFGLQSGGRTESILMSLPPVAHWR. 260–262 provides a ligand contact to substrate; it reads GGR.

Belongs to the aerobic coproporphyrinogen-III oxidase family. In terms of assembly, homodimer. Requires a divalent metal cation as cofactor.

It is found in the cytoplasm. It carries out the reaction coproporphyrinogen III + O2 + 2 H(+) = protoporphyrinogen IX + 2 CO2 + 2 H2O. It functions in the pathway porphyrin-containing compound metabolism; protoporphyrin-IX biosynthesis; protoporphyrinogen-IX from coproporphyrinogen-III (O2 route): step 1/1. In terms of biological role, involved in the heme biosynthesis. Catalyzes the aerobic oxidative decarboxylation of propionate groups of rings A and B of coproporphyrinogen-III to yield the vinyl groups in protoporphyrinogen-IX. The chain is Oxygen-dependent coproporphyrinogen-III oxidase from Methylococcus capsulatus (strain ATCC 33009 / NCIMB 11132 / Bath).